Consider the following 1044-residue polypeptide: Isoleucine--tRNA ligase (1044 aa).

A 'HIGH' region motif is present at residues Pro48–His58. The short motif at Lys594–Ser598 is the 'KMSKS' region element. Lys597 contacts ATP.

This sequence belongs to the class-I aminoacyl-tRNA synthetase family. IleS type 2 subfamily. As to quaternary structure, monomer. The cofactor is Zn(2+).

It localises to the cytoplasm. It catalyses the reaction tRNA(Ile) + L-isoleucine + ATP = L-isoleucyl-tRNA(Ile) + AMP + diphosphate. Its function is as follows. Catalyzes the attachment of isoleucine to tRNA(Ile). As IleRS can inadvertently accommodate and process structurally similar amino acids such as valine, to avoid such errors it has two additional distinct tRNA(Ile)-dependent editing activities. One activity is designated as 'pretransfer' editing and involves the hydrolysis of activated Val-AMP. The other activity is designated 'posttransfer' editing and involves deacylation of mischarged Val-tRNA(Ile). This chain is Isoleucine--tRNA ligase, found in Borrelia hermsii (strain HS1 / DAH).